A 482-amino-acid polypeptide reads, in one-letter code: tRNA sulfurtransferase (482 aa).

A THUMP domain is found at 61–165 (EQAIEALACI…GEELFIVSAI (105 aa)). Residues 183 to 184 (LI), K265, G287, and Q296 each bind ATP. Cysteines 344 and 456 form a disulfide. In terms of domain architecture, Rhodanese spans 404–482 (SGDNEVILDI…GFANVKVYRP (79 aa)). C456 (cysteine persulfide intermediate) is an active-site residue.

The protein belongs to the ThiI family.

It localises to the cytoplasm. It catalyses the reaction [ThiI sulfur-carrier protein]-S-sulfanyl-L-cysteine + a uridine in tRNA + 2 reduced [2Fe-2S]-[ferredoxin] + ATP + H(+) = [ThiI sulfur-carrier protein]-L-cysteine + a 4-thiouridine in tRNA + 2 oxidized [2Fe-2S]-[ferredoxin] + AMP + diphosphate. It carries out the reaction [ThiS sulfur-carrier protein]-C-terminal Gly-Gly-AMP + S-sulfanyl-L-cysteinyl-[cysteine desulfurase] + AH2 = [ThiS sulfur-carrier protein]-C-terminal-Gly-aminoethanethioate + L-cysteinyl-[cysteine desulfurase] + A + AMP + 2 H(+). It participates in cofactor biosynthesis; thiamine diphosphate biosynthesis. Functionally, catalyzes the ATP-dependent transfer of a sulfur to tRNA to produce 4-thiouridine in position 8 of tRNAs, which functions as a near-UV photosensor. Also catalyzes the transfer of sulfur to the sulfur carrier protein ThiS, forming ThiS-thiocarboxylate. This is a step in the synthesis of thiazole, in the thiamine biosynthesis pathway. The sulfur is donated as persulfide by IscS. In Aeromonas hydrophila subsp. hydrophila (strain ATCC 7966 / DSM 30187 / BCRC 13018 / CCUG 14551 / JCM 1027 / KCTC 2358 / NCIMB 9240 / NCTC 8049), this protein is tRNA sulfurtransferase.